A 357-amino-acid polypeptide reads, in one-letter code: Isopentenyl-diphosphate delta-isomerase (357 aa).

A substrate-binding site is contributed by 13-14; the sequence is RK. FMN contacts are provided by residues Ser-71, 72 to 74, Ser-102, and Asn-131; that span reads SMT. 102–104 contacts substrate; it reads SMR. Gln-166 is a substrate binding site. Glu-167 contributes to the Mg(2+) binding site. Residues Lys-198 and 311-312 each bind FMN; that span reads AR.

This sequence belongs to the IPP isomerase type 2 family. In terms of assembly, homooctamer. Dimer of tetramers. The cofactor is FMN. NADPH serves as cofactor. It depends on Mg(2+) as a cofactor.

The protein localises to the cytoplasm. The catalysed reaction is isopentenyl diphosphate = dimethylallyl diphosphate. Functionally, involved in the biosynthesis of isoprenoids. Catalyzes the 1,3-allylic rearrangement of the homoallylic substrate isopentenyl (IPP) to its allylic isomer, dimethylallyl diphosphate (DMAPP). In Chlorobium chlorochromatii (strain CaD3), this protein is Isopentenyl-diphosphate delta-isomerase.